A 214-amino-acid polypeptide reads, in one-letter code: Outer-membrane lipoprotein LolB (214 aa).

An N-terminal signal peptide occupies residues 1–25; it reads MNNLKRLTKTIFSCFTLSALLLLAG. Cys26 carries the N-palmitoyl cysteine lipid modification. Cys26 is lipidated: S-diacylglycerol cysteine.

Belongs to the LolB family. Monomer.

It is found in the cell outer membrane. In terms of biological role, plays a critical role in the incorporation of lipoproteins in the outer membrane after they are released by the LolA protein. In Shewanella baltica (strain OS155 / ATCC BAA-1091), this protein is Outer-membrane lipoprotein LolB.